The following is a 272-amino-acid chain: D-aminoacyl-tRNA deacylase (272 aa).

Belongs to the DtdA deacylase family. Monomer. It depends on Zn(2+) as a cofactor.

It carries out the reaction a D-aminoacyl-tRNA + H2O = a tRNA + a D-alpha-amino acid + H(+). The enzyme catalyses glycyl-tRNA(Ala) + H2O = tRNA(Ala) + glycine + H(+). Its function is as follows. D-aminoacyl-tRNA deacylase with broad substrate specificity. By recycling D-aminoacyl-tRNA to D-amino acids and free tRNA molecules, this enzyme counteracts the toxicity associated with the formation of D-aminoacyl-tRNA entities in vivo. In Hyperthermus butylicus (strain DSM 5456 / JCM 9403 / PLM1-5), this protein is D-aminoacyl-tRNA deacylase.